Here is a 153-residue protein sequence, read N- to C-terminus: ATP synthase subunit b' (153 aa).

The chain crosses the membrane as a helical span at residues Thr20–Phe40.

This sequence belongs to the ATPase B chain family. In terms of assembly, F-type ATPases have 2 components, F(1) - the catalytic core - and F(0) - the membrane proton channel. F(1) has five subunits: alpha(3), beta(3), gamma(1), delta(1), epsilon(1). F(0) has four main subunits: a(1), b(1), b'(1) and c(10-14). The alpha and beta chains form an alternating ring which encloses part of the gamma chain. F(1) is attached to F(0) by a central stalk formed by the gamma and epsilon chains, while a peripheral stalk is formed by the delta, b and b' chains.

The protein resides in the cellular thylakoid membrane. In terms of biological role, f(1)F(0) ATP synthase produces ATP from ADP in the presence of a proton or sodium gradient. F-type ATPases consist of two structural domains, F(1) containing the extramembraneous catalytic core and F(0) containing the membrane proton channel, linked together by a central stalk and a peripheral stalk. During catalysis, ATP synthesis in the catalytic domain of F(1) is coupled via a rotary mechanism of the central stalk subunits to proton translocation. Component of the F(0) channel, it forms part of the peripheral stalk, linking F(1) to F(0). The b'-subunit is a diverged and duplicated form of b found in plants and photosynthetic bacteria. The sequence is that of ATP synthase subunit b' from Prochlorococcus marinus (strain SARG / CCMP1375 / SS120).